Consider the following 276-residue polypeptide: uncharacterized protein (276 aa).

This sequence to E.cuniculi ECU05_1600/ECU11_0130.

This is an uncharacterized protein from Encephalitozoon cuniculi (strain GB-M1) (Microsporidian parasite).